A 1072-amino-acid polypeptide reads, in one-letter code: Carbamoyl phosphate synthase large chain (1072 aa).

The carboxyphosphate synthetic domain stretch occupies residues 1 to 401 (MPKRLDINTI…SLLKAVRSLE (401 aa)). Arg129, Arg169, Gly175, Gly176, Lys208, Ile210, Glu215, Gly241, Val242, His243, Gln284, and Glu298 together coordinate ATP. In terms of domain architecture, ATP-grasp 1 spans 133-327 (RTLMQELNEP…IAKLAAKIAV (195 aa)). Positions 284, 298, and 300 each coordinate Mg(2+). Gln284, Glu298, and Asn300 together coordinate Mn(2+). The interval 402 to 546 (LGIYHLELDH…YSTYADENES (145 aa)) is oligomerization domain. The tract at residues 547–929 (IVTDRKSVVV…ALYKGLVASG (383 aa)) is carbamoyl phosphate synthetic domain. Residues 671-861 (EAALTKLGIP…MANVATKVIL (191 aa)) form the ATP-grasp 2 domain. Residues Arg707, Arg746, Glu752, Gly777, Val778, His779, Ser780, Gln820, and Glu832 each coordinate ATP. Mg(2+)-binding residues include Gln820, Glu832, and Asn834. Residues Gln820, Glu832, and Asn834 each coordinate Mn(2+). The 143-residue stretch at 930-1072 (INIPTHGSVI…QTKRHEVVHA (143 aa)) folds into the MGS-like domain. The segment at 930–1072 (INIPTHGSVI…QTKRHEVVHA (143 aa)) is allosteric domain.

The protein belongs to the CarB family. Composed of two chains; the small (or glutamine) chain promotes the hydrolysis of glutamine to ammonia, which is used by the large (or ammonia) chain to synthesize carbamoyl phosphate. Tetramer of heterodimers (alpha,beta)4. It depends on Mg(2+) as a cofactor. Requires Mn(2+) as cofactor.

The catalysed reaction is hydrogencarbonate + L-glutamine + 2 ATP + H2O = carbamoyl phosphate + L-glutamate + 2 ADP + phosphate + 2 H(+). It carries out the reaction hydrogencarbonate + NH4(+) + 2 ATP = carbamoyl phosphate + 2 ADP + phosphate + 2 H(+). Its pathway is amino-acid biosynthesis; L-arginine biosynthesis; carbamoyl phosphate from bicarbonate: step 1/1. The protein operates within pyrimidine metabolism; UMP biosynthesis via de novo pathway; (S)-dihydroorotate from bicarbonate: step 1/3. Its function is as follows. Large subunit of the glutamine-dependent carbamoyl phosphate synthetase (CPSase). CPSase catalyzes the formation of carbamoyl phosphate from the ammonia moiety of glutamine, carbonate, and phosphate donated by ATP, constituting the first step of 2 biosynthetic pathways, one leading to arginine and/or urea and the other to pyrimidine nucleotides. The large subunit (synthetase) binds the substrates ammonia (free or transferred from glutamine from the small subunit), hydrogencarbonate and ATP and carries out an ATP-coupled ligase reaction, activating hydrogencarbonate by forming carboxy phosphate which reacts with ammonia to form carbamoyl phosphate. The chain is Carbamoyl phosphate synthase large chain from Bacillus thuringiensis subsp. konkukian (strain 97-27).